We begin with the raw amino-acid sequence, 479 residues long: UDP-N-acetylmuramate--L-alanine ligase (479 aa).

Residue glycine 128–threonine 134 coordinates ATP.

Belongs to the MurCDEF family.

The protein localises to the cytoplasm. It carries out the reaction UDP-N-acetyl-alpha-D-muramate + L-alanine + ATP = UDP-N-acetyl-alpha-D-muramoyl-L-alanine + ADP + phosphate + H(+). It functions in the pathway cell wall biogenesis; peptidoglycan biosynthesis. Cell wall formation. This chain is UDP-N-acetylmuramate--L-alanine ligase, found in Psychrobacter cryohalolentis (strain ATCC BAA-1226 / DSM 17306 / VKM B-2378 / K5).